The chain runs to 242 residues: Myogenic factor 6 (242 aa).

A disordered region spans residues 31-63 (SPLYPGSDGTLSPCQDQMPPEAGSDSSGEEHVL). Positions 93 to 144 (DRRKAATLRERRRLKKINEAFEALKRRTVANPNQRLPKVEILRSAINYIERL) constitute a bHLH domain.

As to quaternary structure, efficient DNA binding requires dimerization with another bHLH protein. Interacts with CSRP3.

The protein localises to the nucleus. Involved in muscle differentiation (myogenic factor). Induces fibroblasts to differentiate into myoblasts. Probable sequence specific DNA-binding protein. In Bos taurus (Bovine), this protein is Myogenic factor 6 (MYF6).